A 99-amino-acid polypeptide reads, in one-letter code: uncharacterized protein (99 aa).

This is an uncharacterized protein from Vibrio alginolyticus.